We begin with the raw amino-acid sequence, 101 residues long: Gamma-secretase subunit PEN-2 (101 aa).

Topologically, residues 1–17 are cytoplasmic; it reads MNLERVSNEEKLNLCRK. The helical intramembrane region spans 18 to 36; sequence YYLGGFAFLPFLWLVNIFW. Residues 37-57 are Cytoplasmic-facing; it reads FFKEAFFAPAYTEQSQIKGYV. A helical transmembrane segment spans residues 58 to 78; the sequence is WRSAVGFLFWVIVLTTWITIF. The Lumenal portion of the chain corresponds to 79-101; sequence QIYRPRWGALGDYLSFTIPLGTP.

This sequence belongs to the PEN-2 family. As to quaternary structure, the functional gamma-secretase complex is composed of at least four polypeptides: a presenilin homodimer (PSEN1 or PSEN2), nicastrin (NCSTN), APH1 (APH1A or APH1B) and PSENEN.

It localises to the endoplasmic reticulum membrane. It is found in the golgi apparatus. Its subcellular location is the golgi stack membrane. The protein resides in the cell membrane. The protein localises to the membrane. Essential subunit of the gamma-secretase complex, an endoprotease complex that catalyzes the intramembrane cleavage of integral membrane proteins such as Notch receptors and APP (amyloid-beta precursor protein). The gamma-secretase complex plays a role in Notch and Wnt signaling cascades and regulation of downstream processes via its role in processing key regulatory proteins, and by regulating cytosolic CTNNB1 levels. PSENEN modulates both endoproteolysis of presenilin and gamma-secretase activity. This Rattus norvegicus (Rat) protein is Gamma-secretase subunit PEN-2 (Psenen).